Consider the following 324-residue polypeptide: uncharacterized protein (324 aa).

This is an uncharacterized protein from Homo sapiens (Human).